We begin with the raw amino-acid sequence, 600 residues long: Probable methyltransferase PMT21 (600 aa).

The Cytoplasmic segment spans residues 1-16 (MKYKDEKYEKAEKGSR). Residues 17–37 (ILPKTVLLILLCGLSFYLGGL) traverse the membrane as a helical; Signal-anchor for type II membrane protein segment. Over 38-600 (YCGKNIIEVS…YSSNASSETN (563 aa)) the chain is Lumenal. N-linked (GlcNAc...) asparagine glycosylation occurs at asparagine 594.

Belongs to the methyltransferase superfamily.

Its subcellular location is the endoplasmic reticulum membrane. This Arabidopsis thaliana (Mouse-ear cress) protein is Probable methyltransferase PMT21 (ERD3).